The following is a 441-amino-acid chain: Glutamyl-tRNA reductase (441 aa).

Substrate-binding positions include 47–50, S110, 115–117, and Q121; these read TCNR and ERE. C48 (nucleophile) is an active-site residue. Residue 192-197 participates in NADP(+) binding; sequence GTGAYA.

Belongs to the glutamyl-tRNA reductase family. As to quaternary structure, homodimer.

It catalyses the reaction (S)-4-amino-5-oxopentanoate + tRNA(Glu) + NADP(+) = L-glutamyl-tRNA(Glu) + NADPH + H(+). The protein operates within porphyrin-containing compound metabolism; protoporphyrin-IX biosynthesis; 5-aminolevulinate from L-glutamyl-tRNA(Glu): step 1/2. Its function is as follows. Catalyzes the NADPH-dependent reduction of glutamyl-tRNA(Glu) to glutamate 1-semialdehyde (GSA). The chain is Glutamyl-tRNA reductase from Pseudarthrobacter chlorophenolicus (strain ATCC 700700 / DSM 12829 / CIP 107037 / JCM 12360 / KCTC 9906 / NCIMB 13794 / A6) (Arthrobacter chlorophenolicus).